Consider the following 199-residue polypeptide: Adenylyl-sulfate kinase (199 aa).

The disordered stretch occupies residues 1–22 (MSESNHITWHDSEVTKKQRQHK). ATP is bound at residue 34–41 (GLSGSGKS). Catalysis depends on serine 108, which acts as the Phosphoserine intermediate.

Belongs to the APS kinase family.

The catalysed reaction is adenosine 5'-phosphosulfate + ATP = 3'-phosphoadenylyl sulfate + ADP + H(+). It functions in the pathway sulfur metabolism; hydrogen sulfide biosynthesis; sulfite from sulfate: step 2/3. Catalyzes the synthesis of activated sulfate. The polypeptide is Adenylyl-sulfate kinase (Staphylococcus epidermidis (strain ATCC 12228 / FDA PCI 1200)).